A 253-amino-acid polypeptide reads, in one-letter code: Cell division protein ZapD (253 aa).

Belongs to the ZapD family. Interacts with FtsZ.

It is found in the cytoplasm. Cell division factor that enhances FtsZ-ring assembly. Directly interacts with FtsZ and promotes bundling of FtsZ protofilaments, with a reduction in FtsZ GTPase activity. The polypeptide is Cell division protein ZapD (Bordetella bronchiseptica (strain ATCC BAA-588 / NCTC 13252 / RB50) (Alcaligenes bronchisepticus)).